The primary structure comprises 141 residues: Large ribosomal subunit protein uL16 (141 aa).

This sequence belongs to the universal ribosomal protein uL16 family. In terms of assembly, part of the 50S ribosomal subunit.

In terms of biological role, binds 23S rRNA and is also seen to make contacts with the A and possibly P site tRNAs. This Hydrogenobaculum sp. (strain Y04AAS1) protein is Large ribosomal subunit protein uL16.